Here is a 482-residue protein sequence, read N- to C-terminus: Ras GTPase-activating protein-binding protein 2 (482 aa).

The NTF2 domain maps to 11–133 (VGREFVRQYY…FYVHNDMFRY (123 aa)). Residues 140–158 (DSEPELDEESEDEVEEEQE) are compositionally biased toward acidic residues. Disordered stretches follow at residues 140–171 (DSEP…QENA) and 187–318 (EPLE…EQND). Phosphoserine occurs at positions 141, 149, and 225. An acidic disordered region region spans residues 142 to 220 (EPELDEESED…PQVEEKNLEE (79 aa)). Residues 191 to 225 (ESSHEPEPEPESETKTEELKPQVEEKNLEELEEKS) are compositionally biased toward basic and acidic residues. At Thr227 the chain carries Phosphothreonine. Ser235 is modified (phosphoserine). Polar residues predominate over residues 247–264 (ASVTSKNLPPSGTVSSSG). Lys281 is covalently cross-linked (Glycyl lysine isopeptide (Lys-Gly) (interchain with G-Cter in SUMO2)). The span at 290-300 (RVREQRPRERP) shows a compositional bias: basic and acidic residues. The RRM domain occupies 331–409 (HQLFVGNLPH…VRLNVEEKKT (79 aa)). At Lys392 the chain carries N6-succinyllysine. Positions 404–476 (VEEKKTRAAR…GRGTGQMEGR (73 aa)) are RG-rich region. The span at 408-432 (KTRAARERETRGGGDDRRDIRRNDR) shows a compositional bias: basic and acidic residues. The tract at residues 408–482 (KTRAARERET…MEGRFTGQRR (75 aa)) is disordered. Over residues 433-445 (GPGGPRGIVGGGM) the composition is skewed to gly residues. Omega-N-methylarginine is present on Arg457. Ser466 bears the Phosphoserine mark. Omega-N-methylarginine is present on Arg468.

In terms of assembly, forms homooligomers. Forms heterodimers with G3BP1. Interacts with NFKBIA (via N-terminus). Interacts (via NTF2 domain) with USP10; inhibiting stress granule formation. Interacts (via NTF2 domain) with CAPRIN1; promoting stress granule formation. Associates (via RG-rich region) with 40S ribosome subunits. Interacts with PABPC1. As to quaternary structure, (Microbial infection) Interacts with non-structural protein 3 (via C-terminus) of Sindbis virus and Semliki forest virus; this interaction inhibits the formation of host stress granules on viral mRNAs and the nsp3-G3BP2 complexes bind viral RNAs and probably orchestrate the assembly of viral replication complexes. (Microbial infection) Cleaved by foot-and-mouth disease virus leader protease; this cleavage suppresses the formation of cytoplasmic stress granules.

The protein resides in the cytoplasm. Its subcellular location is the stress granule. Its activity is regulated as follows. Under physiological conditions, G3BP2 adopts a compact state that is stabilized by intramolecular interactions between the RG-rich and the acidic regions that inhibit phase separation. Upon stress, polysomes disassemble and mRNAs are released in an unfolded protein-free state. Binding of unfolded mRNA to G3BP2 outcompetes the intramolecular interactions and RNA-bound G3BP2 adopts an expanded conformation in which the RG-rich region becomes exposed to engage in protein-protein and protein-RNA interactions, allowing physical cross-linking of RNA molecules to form protein-RNA condensates, leading to liquid-liquid phase separation (LLPS). In terms of biological role, scaffold protein that plays an essential role in cytoplasmic stress granule formation which acts as a platform for antiviral signaling. Plays an essential role in stress granule formation. Stress granules are membraneless compartments that store mRNAs and proteins, such as stalled translation pre-initiation complexes, in response to stress. Promotes formation of stress granules phase-separated membraneless compartment by undergoing liquid-liquid phase separation (LLPS) upon unfolded RNA-binding: functions as a molecular switch that triggers RNA-dependent LLPS in response to a rise in intracellular free RNA concentrations. The protein is Ras GTPase-activating protein-binding protein 2 of Homo sapiens (Human).